A 369-amino-acid polypeptide reads, in one-letter code: MIDFELKQKIDEAKKKFEDIIKVFHPENKRKELEELEKQMGDSDFWSDQRKAREISQKAQRIRKIIDDMKDIEAKFEDLDAAIELSDEDQSFVETIKEMVEEIEKKVKTFELELILNGKFDASNAYLTIHPGAGGTESQDWASMLLRMYMRWAERKGFDVQIVDYQPGEEAGIKSAMIYIKGDYAYGYLKYERGVHRLVRISPFDANKRRHTSFASVNVIPEIDDDIDIEINPEDLRIDTYRASGAGGQYVNKTESAVRITHIPTGIVVTCQTERSQLQNKETALKVLKARLYQLELEKRQKQLEEIQGELKDISWGNQIRSYVFQPYTMVKDHRTNVETGNIDAVMDGEIDIFIESELIHFAGIRNKQ.

N5-methylglutamine is present on Q249.

This sequence belongs to the prokaryotic/mitochondrial release factor family. Methylated by PrmC. Methylation increases the termination efficiency of RF2.

It localises to the cytoplasm. Functionally, peptide chain release factor 2 directs the termination of translation in response to the peptide chain termination codons UGA and UAA. The sequence is that of Peptide chain release factor 2 from Thermosipho africanus (strain TCF52B).